The chain runs to 299 residues: tRNA dimethylallyltransferase (299 aa).

13–20 (GPTASGKT) lines the ATP pocket. Substrate is bound at residue 15–20 (TASGKT). The interval 38 to 41 (DSRQ) is interaction with substrate tRNA.

It belongs to the IPP transferase family. In terms of assembly, monomer. Mg(2+) is required as a cofactor.

It carries out the reaction adenosine(37) in tRNA + dimethylallyl diphosphate = N(6)-dimethylallyladenosine(37) in tRNA + diphosphate. In terms of biological role, catalyzes the transfer of a dimethylallyl group onto the adenine at position 37 in tRNAs that read codons beginning with uridine, leading to the formation of N6-(dimethylallyl)adenosine (i(6)A). This Prochlorococcus marinus (strain MIT 9515) protein is tRNA dimethylallyltransferase.